A 185-amino-acid polypeptide reads, in one-letter code: Elongation factor P (185 aa).

This sequence belongs to the elongation factor P family.

It localises to the cytoplasm. Its pathway is protein biosynthesis; polypeptide chain elongation. Its function is as follows. Involved in peptide bond synthesis. Stimulates efficient translation and peptide-bond synthesis on native or reconstituted 70S ribosomes in vitro. Probably functions indirectly by altering the affinity of the ribosome for aminoacyl-tRNA, thus increasing their reactivity as acceptors for peptidyl transferase. In Clostridium perfringens (strain ATCC 13124 / DSM 756 / JCM 1290 / NCIMB 6125 / NCTC 8237 / Type A), this protein is Elongation factor P.